The primary structure comprises 240 residues: Probable hydroxyacylglutathione hydrolase (240 aa).

His-33, His-35, Asp-37, His-38, His-95, and Asp-119 together coordinate Zn(2+). Substrate is bound by residues Arg-128, 158–160, and 234–237; these read HEY and REEK. Zn(2+) is bound at residue His-158.

This sequence belongs to the metallo-beta-lactamase superfamily. Glyoxalase II family. Zn(2+) is required as a cofactor.

The enzyme catalyses an S-(2-hydroxyacyl)glutathione + H2O = a 2-hydroxy carboxylate + glutathione + H(+). It participates in secondary metabolite metabolism; methylglyoxal degradation; (R)-lactate from methylglyoxal: step 2/2. In terms of biological role, thiolesterase that catalyzes the hydrolysis of S-D-lactoyl-glutathione to form glutathione and D-lactic acid. In Schistosoma mansoni (Blood fluke), this protein is Probable hydroxyacylglutathione hydrolase.